Reading from the N-terminus, the 471-residue chain is MAAPMLRHLCRVPQSGVWTRGPRAVRPGARGMLVAPRARGLFKEFFPESGTKTELPELFDRRRAGSPQTVYCGFDPTGDSLHVGHLLTLLGLFHFQRAGHNVIALVGGSTALLGDPSGRTKEREALSAECVRANARALQRGLETLAANHARLFADGRPWGTFTVLDNAAWFQKQHLMDFLATVGGHFRMGTLLSRLSVQSRLKSPEGMSLAEFFYQVLQAYDFYYLFRHYGCRVQLGGSDQLGNIMSGYEFIHKLTGEDVFGITVPLITSTTGAKLGKSAGNAVWLNREKTSPFELYQFFIRQQDDSVERYLKLFTFLPLPEIDHIMQLHVKEPEKRIAQKRLAAEVTKLVHGQEGLDSAKRCTQALYHSSIEALEVMSDQELKELFKEASFSELVLDPGTSVIDTCRKANAIPDGPRGYRMITEGGVSINHRQVTNPESVLVIGQHILKNGLSLLKIGKRNFYIIKWLQL.

Y71 contacts L-tyrosine. ATP is bound at residue D75. The 'HIGH' region signature appears at 76 to 85 (PTGDSLHVGH). D115, Y215, Q219, D222, and Q241 together coordinate L-tyrosine. I268 and K278 together coordinate ATP. Residues 275-279 (KLGKS) carry the 'KMSKS' region motif. An N6-acetyllysine mark is found at K349 and K361.

The protein belongs to the class-I aminoacyl-tRNA synthetase family. As to quaternary structure, homodimer.

The protein localises to the mitochondrion matrix. The catalysed reaction is tRNA(Tyr) + L-tyrosine + ATP = L-tyrosyl-tRNA(Tyr) + AMP + diphosphate + H(+). Catalyzes the attachment of tyrosine to tRNA(Tyr) in a two-step reaction: tyrosine is first activated by ATP to form Tyr-AMP and then transferred to the acceptor end of tRNA(Tyr). The protein is Tyrosine--tRNA ligase, mitochondrial (Yars2) of Rattus norvegicus (Rat).